A 153-amino-acid chain; its full sequence is Endoribonuclease YbeY (153 aa).

Zn(2+) is bound by residues histidine 118, histidine 122, and histidine 128.

The protein belongs to the endoribonuclease YbeY family. Zn(2+) is required as a cofactor.

The protein resides in the cytoplasm. In terms of biological role, single strand-specific metallo-endoribonuclease involved in late-stage 70S ribosome quality control and in maturation of the 3' terminus of the 16S rRNA. The polypeptide is Endoribonuclease YbeY (Staphylococcus carnosus (strain TM300)).